Reading from the N-terminus, the 156-residue chain is Ribosome maturation factor RimP (156 aa).

It belongs to the RimP family.

The protein resides in the cytoplasm. In terms of biological role, required for maturation of 30S ribosomal subunits. The polypeptide is Ribosome maturation factor RimP (Treponema pallidum (strain Nichols)).